The chain runs to 527 residues: Cyclin-L1 (527 aa).

The disordered stretch occupies residues 1-37 (MASGPHPTSTAAAASASSAAPSAGGSSSGTTTTTTTT). Cyclin-like stretches follow at residues 89–191 (ELIQ…RVLK) and 204–288 (KIIV…ETLR). Phosphothreonine is present on T326. Residues 327-527 (PALSTLGGFS…SRSGHGRHRR (201 aa)) are disordered. Phosphoserine occurs at positions 336 and 339. Glycyl lysine isopeptide (Lys-Gly) (interchain with G-Cter in SUMO2) cross-links involve residues K340 and K348. Positions 343–353 (SPREVKAEEKS) are enriched in basic and acidic residues. Residues S353 and S356 each carry the phosphoserine modification. A compositionally biased stretch (basic and acidic residues) spans 362–371 (VKKEPEDRQQ). A Glycyl lysine isopeptide (Lys-Gly) (interchain with G-Cter in SUMO2) cross-link involves residue K363. S375 is subject to Phosphoserine. 4 stretches are compositionally biased toward basic residues: residues 383-419 (DSKRSRNSRSASRSRSRTRSRSRSHTPRRHYNNRRSR), 439-453 (RRHHNHGSPHLKAKH), 461-477 (SNRHGHKRKKSRSRSQS), and 487-499 (KKHRHERGHHRDR). The RS stretch occupies residues 391–433 (RSASRSRSRTRSRSRSHTPRRHYNNRRSRSGTYSSRSRSRSRS). Phosphoserine is present on S446. Basic and acidic residues predominate over residues 500-509 (RERSRSFERS). A compositionally biased stretch (basic residues) spans 510 to 527 (HKGKHHGGSRSGHGRHRR).

The protein belongs to the cyclin family. Cyclin L subfamily. In terms of assembly, interacts with POLR2A via its hyperphosphorylated C-terminal domain (CTD). Interacts with CDK11A, CDK11B, CDK12 and CDK13. May form a ternary complex with CDK11B and casein kinase II (CKII). Interacts with pre-mRNA-splicing factors, including at least SRSF1, SRSF2 AND SRSF7/SLU7. In terms of tissue distribution, ubiquitous with higher level in liver; expressed in striatal neurons.

It localises to the nucleus speckle. It is found in the nucleus. The protein localises to the nucleoplasm. In terms of biological role, involved in pre-mRNA splicing. Functions in association with cyclin-dependent kinases (CDKs). May play a role in the regulation of RNA polymerase II (pol II). Inhibited by the CDK-specific inhibitor CDKN1A/p21. This chain is Cyclin-L1 (Ccnl1), found in Rattus norvegicus (Rat).